We begin with the raw amino-acid sequence, 150 residues long: Large ribosomal subunit protein bL9 (150 aa).

This sequence belongs to the bacterial ribosomal protein bL9 family.

Its function is as follows. Binds to the 23S rRNA. This Idiomarina loihiensis (strain ATCC BAA-735 / DSM 15497 / L2-TR) protein is Large ribosomal subunit protein bL9.